The primary structure comprises 466 residues: 3-isopropylmalate dehydratase large subunit (466 aa).

[4Fe-4S] cluster-binding residues include Cys-347, Cys-407, and Cys-410.

This sequence belongs to the aconitase/IPM isomerase family. LeuC type 1 subfamily. Heterodimer of LeuC and LeuD. [4Fe-4S] cluster is required as a cofactor.

The enzyme catalyses (2R,3S)-3-isopropylmalate = (2S)-2-isopropylmalate. It functions in the pathway amino-acid biosynthesis; L-leucine biosynthesis; L-leucine from 3-methyl-2-oxobutanoate: step 2/4. Functionally, catalyzes the isomerization between 2-isopropylmalate and 3-isopropylmalate, via the formation of 2-isopropylmaleate. This Pectobacterium atrosepticum (strain SCRI 1043 / ATCC BAA-672) (Erwinia carotovora subsp. atroseptica) protein is 3-isopropylmalate dehydratase large subunit.